The following is a 243-amino-acid chain: PF03932 family protein CutC (243 aa).

It belongs to the CutC family.

It is found in the cytoplasm. This is PF03932 family protein CutC from Parabacteroides distasonis (strain ATCC 8503 / DSM 20701 / CIP 104284 / JCM 5825 / NCTC 11152).